Here is a 491-residue protein sequence, read N- to C-terminus: Acetyl-coenzyme A carboxylase carboxyl transferase subunit beta (491 aa).

A CoA carboxyltransferase N-terminal domain is found at 132–491 (LWNQCENCFI…ISELLNLHAL (360 aa)). Zn(2+)-binding residues include C136, C139, C155, and C158. The segment at 136-158 (CENCFIPNYKKVLKSNMQICEEC) adopts a C4-type zinc-finger fold. Basic and acidic residues predominate over residues 252–262 (EKVEEWTKPDL). 2 disordered regions span residues 252–273 (EKVE…DEER) and 279–298 (DKGE…EDDD). Positions 284–298 (SQEIEDSEANDEDDD) are enriched in acidic residues.

Belongs to the AccD/PCCB family. As to quaternary structure, acetyl-CoA carboxylase is a heterohexamer composed of biotin carboxyl carrier protein, biotin carboxylase and 2 subunits each of ACCase subunit alpha and ACCase plastid-coded subunit beta (accD). Zn(2+) serves as cofactor.

It is found in the plastid. It carries out the reaction N(6)-carboxybiotinyl-L-lysyl-[protein] + acetyl-CoA = N(6)-biotinyl-L-lysyl-[protein] + malonyl-CoA. Its pathway is lipid metabolism; malonyl-CoA biosynthesis; malonyl-CoA from acetyl-CoA: step 1/1. Its function is as follows. Component of the acetyl coenzyme A carboxylase (ACC) complex. Biotin carboxylase (BC) catalyzes the carboxylation of biotin on its carrier protein (BCCP) and then the CO(2) group is transferred by the transcarboxylase to acetyl-CoA to form malonyl-CoA. The polypeptide is Acetyl-coenzyme A carboxylase carboxyl transferase subunit beta (Cuscuta gronovii (Common dodder)).